The primary structure comprises 4022 residues: Intermembrane lipid transfer protein VPS13B (4022 aa).

The 101-residue stretch at L2 to S102 folds into the Chorein N-terminal domain. The disordered stretch occupies residues H100–D134. Residues C103 to S119 are compositionally biased toward polar residues. A phosphoserine mark is found at S414, S999, S1002, and S1033. The segment at N1247–N1314 is disordered. Composition is skewed to polar residues over residues P1264–D1292 and F1302–N1314. S1815 carries the post-translational modification Phosphoserine. A compositionally biased stretch (basic and acidic residues) spans K1860 to K1872. The interval K1860–V1880 is disordered. Positions H2631 to Q2716 constitute an SHR-BD domain. Residues A3908–P4022 form a localizes the protein to the Golgi apparatus region.

Belongs to the VPS13 family. Interacts with STX6. Interacts with STX12. Interacts with RAB6A isoform 1 (GTP-bound) and isoform 2 (GTP-bound). Interacts with RAB6B (GTP-bound). As to expression, widely expressed. There is apparent differential expression of different transcripts. In fetal brain, lung, liver, and kidney, two transcripts of 2 and 5 kb are identified. These transcripts are also seen in all adult tissues analyzed. A larger transcript (12-14 kb) is expressed in prostate, testis, ovary, and colon in the adult. Expression is very low in adult brain tissue. Expressed in peripheral blood lymphocytes. Isoform 1 and isoform 2 are expressed in brain and retina. Isoform 2 is expressed ubiquitously.

The protein resides in the recycling endosome membrane. It is found in the cytoplasmic vesicle. Its subcellular location is the secretory vesicle. The protein localises to the acrosome membrane. It localises to the golgi apparatus. The protein resides in the cis-Golgi network membrane. It is found in the endoplasmic reticulum-Golgi intermediate compartment membrane. Its subcellular location is the trans-Golgi network membrane. The protein localises to the early endosome membrane. It localises to the lysosome membrane. In terms of biological role, mediates the transfer of lipids between membranes at organelle contact sites. Binds phosphatidylinositol 3-phosphate. Functions as a tethering factor in the slow endocytic recycling pathway, to assist traffic between early and recycling endosomes. Involved in the transport of proacrosomal vesicles to the nuclear dense lamina (NDL) during spermatid development. Plays a role in the assembly of the Golgi apparatus, possibly by mediating trafficking to the Golgi membrane. Plays a role in the development of the nervous system, and may be required for neuron projection development. May also play a role during adipose tissue development. Required for maintenance of the ocular lens. The chain is Intermembrane lipid transfer protein VPS13B (VPS13B) from Homo sapiens (Human).